Reading from the N-terminus, the 316-residue chain is MYLGVLLGGISREREISIRSGKRIAQALRNMGHVVDEIDVDDNFIYKLSELKKYDALFNILHGTFGEDGKMQAILDSIGIPYTGSGVETSVIAFDKYLCNLFVENTIERYEELSVVKIPNFLLISSEEFEESKIYMIEEKIGLPCVVKPRKEGSSIGTHICFSKEELLDALKNEFKNYDEMIVQEYIKGKEITVSVIDINGTPTVLPILELRPKKLFYDYEAKYTDGMTEFIIPAELDGETTEKINHAVLKIYKSLGCKHFSRIDGIVKDGVFYFLEVNTLPGMTELSDLPMSANAFGISFDELVDLIIKEACRKL.

One can recognise an ATP-grasp domain in the interval 108 to 310; the sequence is ERYEELSVVK…FDELVDLIIK (203 aa). ATP is bound at residue 138–193; it reads EEKIGLPCVVKPRKEGSSIGTHICFSKEELLDALKNEFKNYDEMIVQEYIKGKEIT. Mg(2+) is bound by residues Asp265, Glu277, and Asn279.

It belongs to the D-alanine--D-alanine ligase family. It depends on Mg(2+) as a cofactor. The cofactor is Mn(2+).

It localises to the cytoplasm. It carries out the reaction 2 D-alanine + ATP = D-alanyl-D-alanine + ADP + phosphate + H(+). The protein operates within cell wall biogenesis; peptidoglycan biosynthesis. Functionally, cell wall formation. This is D-alanine--D-alanine ligase from Fervidobacterium nodosum (strain ATCC 35602 / DSM 5306 / Rt17-B1).